An 88-amino-acid polypeptide reads, in one-letter code: Small ribosomal subunit protein uS17 (88 aa).

It belongs to the universal ribosomal protein uS17 family. Part of the 30S ribosomal subunit.

Its function is as follows. One of the primary rRNA binding proteins, it binds specifically to the 5'-end of 16S ribosomal RNA. This Pseudomonas savastanoi pv. phaseolicola (strain 1448A / Race 6) (Pseudomonas syringae pv. phaseolicola (strain 1448A / Race 6)) protein is Small ribosomal subunit protein uS17.